The chain runs to 478 residues: ATP synthase subunit beta (478 aa).

Gly161–Thr168 contributes to the ATP binding site.

Belongs to the ATPase alpha/beta chains family. In terms of assembly, F-type ATPases have 2 components, CF(1) - the catalytic core - and CF(0) - the membrane proton channel. CF(1) has five subunits: alpha(3), beta(3), gamma(1), delta(1), epsilon(1). CF(0) has four main subunits: a(1), b(1), b'(1) and c(9-12).

The protein localises to the cell inner membrane. The enzyme catalyses ATP + H2O + 4 H(+)(in) = ADP + phosphate + 5 H(+)(out). Produces ATP from ADP in the presence of a proton gradient across the membrane. The catalytic sites are hosted primarily by the beta subunits. The sequence is that of ATP synthase subunit beta from Gloeobacter violaceus (strain ATCC 29082 / PCC 7421).